A 704-amino-acid chain; its full sequence is Polyribonucleotide nucleotidyltransferase 4 (704 aa).

Positions 483 and 489 each coordinate Mg(2+). One can recognise a KH domain in the interval 550–609 (PRVLKMKIHPDKIRDVIGSGGKTINRIIDETGVKIDIDNDGTIFIAAESQEAVEKAIIII). The S1 motif domain occupies 619-687 (GQNYTGKVIK…QQGKINLSRK (69 aa)).

Belongs to the polyribonucleotide nucleotidyltransferase family. The cofactor is Mg(2+).

The protein localises to the cytoplasm. It catalyses the reaction RNA(n+1) + phosphate = RNA(n) + a ribonucleoside 5'-diphosphate. In terms of biological role, involved in mRNA degradation. Catalyzes the phosphorolysis of single-stranded polyribonucleotides processively in the 3'- to 5'-direction. The sequence is that of Polyribonucleotide nucleotidyltransferase 4 from Alkaliphilus metalliredigens (strain QYMF).